Consider the following 591-residue polypeptide: Aspartate--tRNA(Asp/Asn) ligase (591 aa).

E175 lines the L-aspartate pocket. Residues 199 to 202 (QQFK) are aspartate. Positions 221 and 453 each coordinate L-aspartate. Residue 221–223 (RDE) participates in ATP binding. E486 provides a ligand contact to ATP. Position 493 (R493) interacts with L-aspartate. ATP is bound at residue 538-541 (GIDR).

The protein belongs to the class-II aminoacyl-tRNA synthetase family. Type 1 subfamily. As to quaternary structure, homodimer.

Its subcellular location is the cytoplasm. It catalyses the reaction tRNA(Asx) + L-aspartate + ATP = L-aspartyl-tRNA(Asx) + AMP + diphosphate. In terms of biological role, aspartyl-tRNA synthetase with relaxed tRNA specificity since it is able to aspartylate not only its cognate tRNA(Asp) but also tRNA(Asn). Reaction proceeds in two steps: L-aspartate is first activated by ATP to form Asp-AMP and then transferred to the acceptor end of tRNA(Asp/Asn). The chain is Aspartate--tRNA(Asp/Asn) ligase from Jannaschia sp. (strain CCS1).